The chain runs to 449 residues: Biotin carboxylase (449 aa).

Positions 1–445 (MLDKIVIANR…NIHYLEKKLG (445 aa)) constitute a Biotin carboxylation domain. ATP is bound by residues K116, K159, 165 to 166 (GG), 201 to 204 (EKYL), H209, and H236. In terms of domain architecture, ATP-grasp spans 120–317 (IAAMKKAGVP…LIKEQLRIAA (198 aa)). Hydrogencarbonate is bound at residue K238. ATP is bound by residues E276 and E288. Mg(2+) contacts are provided by E276, E288, and N290. 3 residues coordinate Mn(2+): E276, E288, and N290. R292, V295, and R338 together coordinate hydrogencarbonate. R292 is a catalytic residue. R338 provides a ligand contact to biotin.

Acetyl-CoA carboxylase is a heterohexamer of biotin carboxyl carrier protein, biotin carboxylase and the two subunits of carboxyl transferase in a 2:2 complex. The cofactor is Mg(2+). Requires Mn(2+) as cofactor.

It catalyses the reaction N(6)-biotinyl-L-lysyl-[protein] + hydrogencarbonate + ATP = N(6)-carboxybiotinyl-L-lysyl-[protein] + ADP + phosphate + H(+). The protein operates within lipid metabolism; malonyl-CoA biosynthesis; malonyl-CoA from acetyl-CoA: step 1/1. Its function is as follows. This protein is a component of the acetyl coenzyme A carboxylase complex; first, biotin carboxylase catalyzes the carboxylation of the carrier protein and then the transcarboxylase transfers the carboxyl group to form malonyl-CoA. The polypeptide is Biotin carboxylase (accC) (Escherichia coli (strain K12)).